The following is a 67-amino-acid chain: Protein AaeX (67 aa).

The next 2 helical transmembrane spans lie at 3–23 and 47–67; these read LFPVIVVFGLSFPPIFFELLL and PALFNTALYCCLFYLISRLFV.

This sequence belongs to the AaeX family.

The protein localises to the cell membrane. The sequence is that of Protein AaeX from Escherichia coli O157:H7.